A 421-amino-acid chain; its full sequence is Serine hydroxymethyltransferase (421 aa).

Residues L121 and 125 to 127 (GHL) each bind (6S)-5,6,7,8-tetrahydrofolate. Residue K229 is modified to N6-(pyridoxal phosphate)lysine.

It belongs to the SHMT family. Homodimer. Pyridoxal 5'-phosphate serves as cofactor.

The protein resides in the cytoplasm. It catalyses the reaction (6R)-5,10-methylene-5,6,7,8-tetrahydrofolate + glycine + H2O = (6S)-5,6,7,8-tetrahydrofolate + L-serine. Its pathway is one-carbon metabolism; tetrahydrofolate interconversion. It functions in the pathway amino-acid biosynthesis; glycine biosynthesis; glycine from L-serine: step 1/1. Functionally, catalyzes the reversible interconversion of serine and glycine with tetrahydrofolate (THF) serving as the one-carbon carrier. This reaction serves as the major source of one-carbon groups required for the biosynthesis of purines, thymidylate, methionine, and other important biomolecules. Also exhibits THF-independent aldolase activity toward beta-hydroxyamino acids, producing glycine and aldehydes, via a retro-aldol mechanism. In Haemophilus influenzae (strain 86-028NP), this protein is Serine hydroxymethyltransferase.